The primary structure comprises 266 residues: 4-hydroxy-tetrahydrodipicolinate reductase (266 aa).

NAD(+)-binding positions include 8–13 (GAAGRM) and Glu-33. Residue Arg-34 participates in NADP(+) binding. Residues 97 to 99 (GST) and 121 to 124 (APNM) each bind NAD(+). His-154 acts as the Proton donor/acceptor in catalysis. Residue His-155 coordinates (S)-2,3,4,5-tetrahydrodipicolinate. Lys-158 functions as the Proton donor in the catalytic mechanism. 164–165 (GT) serves as a coordination point for (S)-2,3,4,5-tetrahydrodipicolinate.

It belongs to the DapB family.

It is found in the cytoplasm. It catalyses the reaction (S)-2,3,4,5-tetrahydrodipicolinate + NAD(+) + H2O = (2S,4S)-4-hydroxy-2,3,4,5-tetrahydrodipicolinate + NADH + H(+). It carries out the reaction (S)-2,3,4,5-tetrahydrodipicolinate + NADP(+) + H2O = (2S,4S)-4-hydroxy-2,3,4,5-tetrahydrodipicolinate + NADPH + H(+). Its pathway is amino-acid biosynthesis; L-lysine biosynthesis via DAP pathway; (S)-tetrahydrodipicolinate from L-aspartate: step 4/4. Catalyzes the conversion of 4-hydroxy-tetrahydrodipicolinate (HTPA) to tetrahydrodipicolinate. The chain is 4-hydroxy-tetrahydrodipicolinate reductase from Geobacter metallireducens (strain ATCC 53774 / DSM 7210 / GS-15).